We begin with the raw amino-acid sequence, 651 residues long: NADH oxidase (651 aa).

FMN is bound at residue Gln104. The active-site Proton donor is the Tyr175. FMN contacts are provided by residues Arg223 and Gly320 to Arg321. Positions 344, 347, 351, and 364 each coordinate [4Fe-4S] cluster. FAD-binding residues include Ala396, Glu415, Gln423, Lys433, and Ala460.

It in the N-terminal section; belongs to the NADH:flavin oxidoreductase/NADH oxidase family. Homohexamer. Requires FMN as cofactor. FAD serves as cofactor. [4Fe-4S] cluster is required as a cofactor. In terms of processing, the N-terminus is blocked.

It carries out the reaction A + NADH + H(+) = AH2 + NAD(+). Functionally, reduces a range of alternative electron acceptors. This is NADH oxidase from Thermoanaerobacter brockii (Thermoanaerobium brockii).